A 291-amino-acid chain; its full sequence is Exosome complex exonuclease RRP42 (291 aa).

The residue at position 2 (Ala-2) is an N-acetylalanine. Lys-116 carries the N6-acetyllysine modification.

The protein belongs to the RNase PH family. As to quaternary structure, component of the RNA exosome core complex (Exo-9), composed of EXOSC1, EXOSC2, EXOSC3, EXOSC4, EXOSC5, EXOSC6, EXOSC7, EXOSC8 and EXOSC9; within the complex interacts with EXOSC2 and EXOSC4. The catalytically inactive RNA exosome core complex (Exo-9) associates with the catalytic subunit EXOSC10/RRP6. Exo-9 may associate with DIS3 to form the nucleolar exosome complex, or DIS3L to form the cytoplasmic exosome complex. Exo-9 is formed by a hexameric base ring consisting of the heterodimers EXOSC4-EXOSC9, EXOSC5-EXOSC8 and EXOSC6-EXOSC7, and a cap ring consisting of EXOSC1, EXOSC2 and EXOSC3. The RNA exosome complex associates with cofactors C1D/RRP47, MPHOSPH6/MPP6 and MTREX/MTR4. Interacts with ZC3HAV1. Interacts with DIS3; the interaction is direct.

It localises to the nucleus. The protein resides in the nucleolus. It is found in the cytoplasm. In terms of biological role, non-catalytic component of the RNA exosome complex which has 3'-&gt;5' exoribonuclease activity and participates in a multitude of cellular RNA processing and degradation events. In the nucleus, the RNA exosome complex is involved in proper maturation of stable RNA species such as rRNA, snRNA and snoRNA, in the elimination of RNA processing by-products and non-coding 'pervasive' transcripts, such as antisense RNA species and promoter-upstream transcripts (PROMPTs), and of mRNAs with processing defects, thereby limiting or excluding their export to the cytoplasm. The RNA exosome may be involved in Ig class switch recombination (CSR) and/or Ig variable region somatic hypermutation (SHM) by targeting AICDA deamination activity to transcribed dsDNA substrates. In the cytoplasm, the RNA exosome complex is involved in general mRNA turnover and specifically degrades inherently unstable mRNAs containing AU-rich elements (AREs) within their 3' untranslated regions, and in RNA surveillance pathways, preventing translation of aberrant mRNAs. It seems to be involved in degradation of histone mRNA. The catalytic inactive RNA exosome core complex of 9 subunits (Exo-9) is proposed to play a pivotal role in the binding and presentation of RNA for ribonucleolysis, and to serve as a scaffold for the association with catalytic subunits and accessory proteins or complexes. The chain is Exosome complex exonuclease RRP42 (Exosc7) from Mus musculus (Mouse).